Reading from the N-terminus, the 562-residue chain is MPFSELLEQVGSTGRFQVLHVTLLCIPVLMMASHNLLQNFVATVPSHYCNAHANLSQARLSLEESLLITVPLDGAGKPQRCQRYAAPQWHLLGKNGTSGSGDLADATESMDAALQECSDGWSYNSTVRSSTIISEWHLVCDMHSFKQMGQTIYMGGVLVGALLFGGLSDRYGRRILLLISNLLMAVSGTCAAFSSSFSLFCVFRFGCGLALSGLGLNTFSLIVEWIPTRIRTAVGTTTGYCYTLGQLILVLLAYFIRDWRWLTLAVSLPFYVFFLIAWWFHESSRWLALSNRTEHALKNLKSVARFNGRHEEAEKLDIKMLHESMKKEMSCTQGSYSILDLFNTPAMRKRTLCLSAVWLSTSFAYYGLAMDLDKFGVDIYLIQVIFGAVDIPAKVVVVVSMSLIGRRRSQCAVLVVAGITILLNLLVPYDKQTIRTCLAVLGKGCLAASFNCCYLYSGELFPTIIRQNGMGWVSMMARIGAMVAPMVLLTRDYIPWLPGLIYGGAPILSGLAAIFLPETLGYPLPDTIQDVEESGSGRKSKMSTKETITLQDKQANLLKQSA.

Residues 1-15 (MPFSELLEQVGSTGR) lie on the Cytoplasmic side of the membrane. The chain crosses the membrane as a helical span at residues 16–36 (FQVLHVTLLCIPVLMMASHNL). Topologically, residues 37 to 147 (LQNFVATVPS…LVCDMHSFKQ (111 aa)) are extracellular. The helical transmembrane segment at 148–168 (MGQTIYMGGVLVGALLFGGLS) threads the bilayer. The Cytoplasmic portion of the chain corresponds to 169-174 (DRYGRR). The chain crosses the membrane as a helical span at residues 175–195 (ILLLISNLLMAVSGTCAAFSS). Residues 196 to 205 (SFSLFCVFRF) lie on the Extracellular side of the membrane. A helical transmembrane segment spans residues 206–226 (GCGLALSGLGLNTFSLIVEWI). The Cytoplasmic portion of the chain corresponds to 227–235 (PTRIRTAVG). A helical transmembrane segment spans residues 236 to 256 (TTTGYCYTLGQLILVLLAYFI). Topologically, residues 257 to 260 (RDWR) are extracellular. A helical transmembrane segment spans residues 261–281 (WLTLAVSLPFYVFFLIAWWFH). Residues 282–351 (ESSRWLALSN…FNTPAMRKRT (70 aa)) are Cytoplasmic-facing. Residues 352-372 (LCLSAVWLSTSFAYYGLAMDL) form a helical membrane-spanning segment. Over 373–378 (DKFGVD) the chain is Extracellular. A helical membrane pass occupies residues 379–399 (IYLIQVIFGAVDIPAKVVVVV). Topologically, residues 400–408 (SMSLIGRRR) are cytoplasmic. Residues 409–429 (SQCAVLVVAGITILLNLLVPY) traverse the membrane as a helical segment. Residues 430-444 (DKQTIRTCLAVLGKG) lie on the Extracellular side of the membrane. A helical transmembrane segment spans residues 445-465 (CLAASFNCCYLYSGELFPTII). Residues 466–468 (RQN) lie on the Cytoplasmic side of the membrane. A helical membrane pass occupies residues 469–489 (GMGWVSMMARIGAMVAPMVLL). The Extracellular portion of the chain corresponds to 490 to 495 (TRDYIP). Residues 496–516 (WLPGLIYGGAPILSGLAAIFL) form a helical membrane-spanning segment. Over 517–562 (PETLGYPLPDTIQDVEESGSGRKSKMSTKETITLQDKQANLLKQSA) the chain is Cytoplasmic.

The protein belongs to the major facilitator (TC 2.A.1) superfamily. Organic cation transporter (TC 2.A.1.19) family. Glycosylated. Glycosylation is necessary for proper targeting of the transporter to the plasma membrane.

It is found in the cell membrane. It localises to the basolateral cell membrane. The protein localises to the basal cell membrane. Functionally, involved in the renal elimination of endogenous and exogenous organic anions. Functions as organic anion exchanger when the uptake of one molecule of organic anion is coupled with an efflux of one molecule of endogenous dicarboxylic acid (glutarate, ketoglutarate, etc). Mediates the sodium-independent uptake of p-aminohippurate (PAH), 2,3-dimercapto-1-propanesulfonic acid (DMPS), cidofovir, adefovir, 9-(2-phosphonylmethoxyethyl) guanine (PMEG), 9-(2-phosphonylmethoxyethyl) diaminopurine (PMEDAP), ochratoxin (OTA), acyclovir (ACV), 3'-azido-3-'deoxythymidine (AZT), cimetidine (CMD), 2,4-dichloro-phenoxyacetate (2,4-D), hippurate (HA), indoleacetate (IA), indoxyl sulfate (IS), 3-carboxy-4-methyl-5-propyl-2-furanpropionate (CMPF) and edaravone sulfate. Mediates the sodium-independent uptake of p-aminohippurate (PAH). PAH uptake is inhibited by p-chloromercuribenzenesulphonate (PCMBS), diethyl pyrocarbonate (DEPC), indomethacin, sulindac, diclofenac, carprofen, okadaic acid, benzothiazolylcysteine (BTC), S-chlorotrifluoroethylcysteine (CTFC), cysteine S-conjugates S-dichlorovinylcysteine (DCVC), furosemide, steviol, phorbol 12-myristate 13-acetate (PMA), calcium ionophore A23187, benzylpenicillin, bumetamide, losartan, probenecid, phenol red, urate, glutarate and alpha-ketoglutarate. PAH uptake is inhibited by glutarate. This Pseudopleuronectes americanus (Winter flounder) protein is Solute carrier family 22 member 6 (SLC22A6).